A 494-amino-acid chain; its full sequence is Guanosine-5'-triphosphate,3'-diphosphate pyrophosphatase (494 aa).

It belongs to the GppA/Ppx family. GppA subfamily.

The enzyme catalyses guanosine 3'-diphosphate 5'-triphosphate + H2O = guanosine 3',5'-bis(diphosphate) + phosphate + H(+). It participates in purine metabolism; ppGpp biosynthesis; ppGpp from GTP: step 2/2. Its function is as follows. Catalyzes the conversion of pppGpp to ppGpp. Guanosine pentaphosphate (pppGpp) is a cytoplasmic signaling molecule which together with ppGpp controls the 'stringent response', an adaptive process that allows bacteria to respond to amino acid starvation, resulting in the coordinated regulation of numerous cellular activities. This Escherichia fergusonii (strain ATCC 35469 / DSM 13698 / CCUG 18766 / IAM 14443 / JCM 21226 / LMG 7866 / NBRC 102419 / NCTC 12128 / CDC 0568-73) protein is Guanosine-5'-triphosphate,3'-diphosphate pyrophosphatase.